The sequence spans 511 residues: Maturase K (511 aa).

Belongs to the intron maturase 2 family. MatK subfamily.

It localises to the plastid. The protein resides in the chloroplast. Usually encoded in the trnK tRNA gene intron. Probably assists in splicing its own and other chloroplast group II introns. The chain is Maturase K from Hordeum vulgare subsp. spontaneum (Wild barley).